We begin with the raw amino-acid sequence, 579 residues long: General transcriptional corepressor tupA (579 aa).

Residues N83–S101 are compositionally biased toward polar residues. Positions N83–W258 are disordered. Low complexity-rich tracts occupy residues N109–N128, Q157–L198, and M207–N224. The span at K227–T256 shows a compositional bias: basic and acidic residues. 7 WD repeats span residues Q279–V319, D325–T364, G367–T406, G413–R452, G455–R494, G501–M540, and G543–S579.

The protein belongs to the WD repeat TUP1 family. In terms of assembly, associates with trfA to form the trfA-tupA corepressor complex.

Its subcellular location is the nucleus. Its function is as follows. Acts as a component of the trfA-tupA corepressor complex which is involved in the repression of many genes in a wide variety of physiological processes. May also be involved in the derepression of at least some target genes. The complex is recruited to target genes by interaction with DNA-bound transcriptional repressors. The complex recruits histone deacetylases to produce a repressive chromatin structure, interacts with hypoacetylated N-terminal tails of histones H3 and H4 that have been programmed for repression by the action of histone deacetylases and interferes directly with the transcriptional machinery by associating with the RNA polymerase II mediator complex. In Dictyostelium discoideum (Social amoeba), this protein is General transcriptional corepressor tupA (tupA).